An 86-amino-acid polypeptide reads, in one-letter code: Acyl-CoA-binding protein homolog 1 (86 aa).

The 86-residue stretch at 1–86 (MTLSFDDAAA…VEELIAKYGA (86 aa)) folds into the ACB domain. Residues Lys13, 28–32 (YALFK), Lys50, Lys54, and Tyr73 each bind an acyl-CoA.

It belongs to the ACBP family.

Its function is as follows. Binds medium- and long-chain acyl-CoA esters with very high affinity and may function as an intracellular carrier of acyl-CoA esters. The sequence is that of Acyl-CoA-binding protein homolog 1 (acbp-1) from Caenorhabditis elegans.